The chain runs to 308 residues: uncharacterized protein (308 aa).

An S4 RNA-binding domain is found at 15-81 (MRVDTGLARL…QNTPIDIEGM (67 aa)). Residue aspartate 139 is part of the active site.

It belongs to the pseudouridine synthase RluA family.

The catalysed reaction is a uridine in RNA = a pseudouridine in RNA. This is an uncharacterized protein from Mycobacterium tuberculosis (strain CDC 1551 / Oshkosh).